A 267-amino-acid polypeptide reads, in one-letter code: Small ribosomal subunit protein uS10m (267 aa).

Residues 1-10 (MLSRILGVRN) constitute a mitochondrion transit peptide.

It belongs to the universal ribosomal protein uS10 family. As to quaternary structure, part of the mitochondrial small ribosomal subunit.

Its subcellular location is the mitochondrion. Involved in mitochondrial genome encoded proteins translation. Involved in the binding of tRNA to the ribosomes. In Debaryomyces hansenii (strain ATCC 36239 / CBS 767 / BCRC 21394 / JCM 1990 / NBRC 0083 / IGC 2968) (Yeast), this protein is Small ribosomal subunit protein uS10m (RSM10).